A 194-amino-acid polypeptide reads, in one-letter code: Putative manganese efflux pump MntP (194 aa).

6 helical membrane passes run 3-23 (PFSI…AAIG), 37-57 (LRAG…GWLL), 69-89 (DHWI…VAGL), 110-132 (LGLA…SLAF), 147-167 (CTFS…NLIG), and 172-192 (MLGG…HLSG).

This sequence belongs to the MntP (TC 9.B.29) family.

The protein localises to the cell inner membrane. Functionally, probably functions as a manganese efflux pump. The chain is Putative manganese efflux pump MntP from Xanthomonas euvesicatoria pv. vesicatoria (strain 85-10) (Xanthomonas campestris pv. vesicatoria).